The primary structure comprises 100 residues: Small ribosomal subunit protein uS14c (100 aa).

It belongs to the universal ribosomal protein uS14 family. In terms of assembly, part of the 30S ribosomal subunit.

The protein resides in the plastid. It is found in the chloroplast. Binds 16S rRNA, required for the assembly of 30S particles. This chain is Small ribosomal subunit protein uS14c, found in Draba nemorosa (Woodland whitlowgrass).